Here is a 1940-residue protein sequence, read N- to C-terminus: Rho GTPase-activating protein 32 (1940 aa).

The 95-residue stretch at 154–248 folds into the PX; atypical domain; that stretch reads SKELVFLVQI…LTWMEIDNKG (95 aa). Residues 262-324 form the SH3 domain; the sequence is PAIAAAHVIK…PSECVELIND (63 aa). The 196-residue stretch at 375 to 570 folds into the Rho-GAP domain; the sequence is CDLGEHLLNS…FILNHVEVLF (196 aa). Disordered stretches follow at residues 646–746, 1035–1163, 1219–1264, 1430–1454, and 1675–1786; these read FPSE…LSAS, RANQ…FSVT, FTTG…PPVR, KHPR…YTED, and RSRS…HSSA. The segment covering 1047-1061 has biased composition (polar residues); sequence PQGASASESPQELSH. Low complexity-rich tracts occupy residues 1081–1094 and 1145–1163; these read LALA…QASA and SRKT…FSVT. Residues 1691–1707 show a composition bias toward basic and acidic residues; that stretch reads ETKDVRYPGRTEGDERT. The span at 1725-1734 shows a compositional bias: polar residues; that stretch reads PQKQSGSSRS. The segment covering 1736-1755 has biased composition (basic and acidic residues); it reads MQHDISTEQHSQDTLHRQPS.

The protein belongs to the PX domain-containing GAP family.

The protein resides in the cytoplasm. The protein localises to the membrane. It localises to the cell membrane. GTPase-activating protein (GAP) promoting GTP hydrolysis on RHOA, CDC42 and RAC1 small GTPases. The sequence is that of Rho GTPase-activating protein 32 (arhgap32) from Xenopus laevis (African clawed frog).